A 342-amino-acid polypeptide reads, in one-letter code: MKILGIETSCDETGVAIYDEEKGLIANQLYTQIALHADYGGVVPELASRDHIRKTAPLIKAALEEANLTASDIDGIAYTSGPGLVGALLVGATIARSLAYAWNVPAIGVHHMEGHLLAPMLDDNSPHFPFVALLVSGGHTQLVRVDGVGKYEVIGESIDDAAGEAFDKTAKLLGLDYPGGAALSRLAEKGTPNRFTFPRPMTDRAGLDFSFSGLKTFAANTVNQAIKNEGELIEQTKADIAYAFQDAVVDTLAIKCKRALKETGYKRLVIAGGVSANKKLRETLAHLMQNLGGEVFYPQPQFCTDNGAMIAYTGFLRLKQGQHSDLAIDVKPRWAMAELPAI.

Fe cation contacts are provided by His111 and His115. Substrate is bound by residues 134–138, Asp167, Gly180, and Asn277; that span reads LVSGG. Position 305 (Asp305) interacts with Fe cation.

The protein belongs to the KAE1 / TsaD family. The cofactor is Fe(2+).

The protein resides in the cytoplasm. It carries out the reaction L-threonylcarbamoyladenylate + adenosine(37) in tRNA = N(6)-L-threonylcarbamoyladenosine(37) in tRNA + AMP + H(+). In terms of biological role, required for the formation of a threonylcarbamoyl group on adenosine at position 37 (t(6)A37) in tRNAs that read codons beginning with adenine. Is involved in the transfer of the threonylcarbamoyl moiety of threonylcarbamoyl-AMP (TC-AMP) to the N6 group of A37, together with TsaE and TsaB. TsaD likely plays a direct catalytic role in this reaction. The sequence is that of tRNA N6-adenosine threonylcarbamoyltransferase from Haemophilus influenzae (strain ATCC 51907 / DSM 11121 / KW20 / Rd).